The primary structure comprises 706 residues: MANENHGSPREGASLLSHSPGTSSQSQPCSPKPVRLVQDLPEELVHAGWEKCWSRRESRPYYFNRFTNQSLWEMPVLGQHDVLSDPLGLNATPLPQDSSLVETPPVENKSRKRQLSEEQPSGNGVKKPKIEIPVTPTSQSVPSSPSIPGTPTLKIWGSSTEDKQAALLRPTEVYWDLDIQTNAVIKHRGPSEVLPPHPDVELLRSQLILKLRQHYRELCQQREGIEPPRESFNRWMLERKVVDKGCDPLLPSNCEPVVSPSMFREIMNDIPIRLSRIKFREEAKRLLFKYAEAARRLIESRSASPDSRKVVKWNVEDTFSWLRKEHSASKEDYMDRLEHLRRQCGPHVSAAAKDSVEGICSKIYHISLEYVKRIREKHLAVLKENNIPEEVEASELEPRLVYCYPVRLAVSAPPMPSVEMHVENSVVCIRYKGEMVKVSRSYFSKLWLLYRYSCVDDSAFERFLPRVWCLLRRYQMMFGVGLYEGTGLQGSLPVHVFETLHRLFGVSFECFASPLNCYFRQYCSAFPDTDGYFGSRGPCLDFTPLSGSFEANPPFCEELMDAMVSHFEKLLESSAEPLSFIVFIPEWREPPTPALTRMEQSRFKRHQLVLPAFEHEYRSGSQHICKKEEMHYKAVHNTAVLFLQNGPGFAKWGPTPERLQELTAAYKQSGRSHGSSSSSSSSSSSSEAKDRDSGREQGPSREPHPT.

The interval 1-34 (MANENHGSPREGASLLSHSPGTSSQSQPCSPKPV) is disordered. Over residues 16-29 (LSHSPGTSSQSQPC) the composition is skewed to polar residues. At S30 the chain carries Phosphoserine. The WW domain maps to 43-77 (ELVHAGWEKCWSRRESRPYYFNRFTNQSLWEMPVL). Residues 88-148 (GLNATPLPQD…QSVPSSPSIP (61 aa)) form a disordered region. The Nuclear localization signal signature appears at 109–113 (KSRKR). Position 116 is a phosphoserine (S116). Residues 132–147 (IPVTPTSQSVPSSPSI) are compositionally biased toward low complexity. T152 carries the phosphothreonine modification. Substrate-binding residues include R234 and R264. S-adenosyl-L-methionine is bound at residue 552 to 555 (NPPF). Substrate contacts are provided by residues E557 and 587–591 (WREPP). 613–615 (FEH) contacts S-adenosyl-L-methionine. The disordered stretch occupies residues 663–706 (TAAYKQSGRSHGSSSSSSSSSSSSEAKDRDSGREQGPSREPHPT). Positions 668–686 (QSGRSHGSSSSSSSSSSSS) match the Nuclear localization signal motif. Residues 675 to 686 (SSSSSSSSSSSS) are compositionally biased toward low complexity. Positions 687 to 706 (EAKDRDSGREQGPSREPHPT) are enriched in basic and acidic residues.

Belongs to the CAPAM family. As to quaternary structure, interacts with POLR2A; interacts with the phosphorylated C-terminal domain (CTD) of POLR2A.

The protein localises to the nucleus. The enzyme catalyses a 5'-end (N(7)-methyl 5'-triphosphoguanosine)-(2'-O-methyladenosine) in mRNA + S-adenosyl-L-methionine = a 5'-end (N(7)-methyl 5'-triphosphoguanosine)-(N(6),2'-O-dimethyladenosine) in mRNA + S-adenosyl-L-homocysteine + H(+). Cap-specific adenosine methyltransferase activity is inhibited by zinc. Its function is as follows. Cap-specific adenosine methyltransferase that catalyzes formation of N(6),2'-O-dimethyladenosine cap (m6A(m)) by methylating the adenosine at the second transcribed position of capped mRNAs. Recruited to the early elongation complex of RNA polymerase II (RNAPII) via interaction with POLR2A and mediates formation of m6A(m) co-transcriptionally. This Mus musculus (Mouse) protein is mRNA (2'-O-methyladenosine-N(6)-)-methyltransferase.